Reading from the N-terminus, the 392-residue chain is Acetyl-CoA acetyltransferase (392 aa).

Residue Cys-89 is the Acyl-thioester intermediate of the active site. Catalysis depends on proton acceptor residues His-348 and Cys-378.

It belongs to the thiolase-like superfamily. Thiolase family. In terms of assembly, homotetramer.

It is found in the cytoplasm. The catalysed reaction is 2 acetyl-CoA = acetoacetyl-CoA + CoA. The protein operates within biopolymer metabolism; poly-(R)-3-hydroxybutanoate biosynthesis. It functions in the pathway metabolic intermediate biosynthesis; (R)-mevalonate biosynthesis; (R)-mevalonate from acetyl-CoA: step 1/3. This is Acetyl-CoA acetyltransferase from Shinella zoogloeoides (Crabtreella saccharophila).